Reading from the N-terminus, the 1151-residue chain is MDQNANQKKRFFKDELESSIETTLTDKSSFLFEPQVDAIQEENANDPEEQIAQGTQESPFIEQLRAVLPTIRLEVALALEEKYRDIDDGLDLAISEYFDQYQTGNDDAPPSSLELQHSQEVLTVPDNEEKDTDLQLVSVKRKREDDFMQSSQSKKPQRANSSWKKFVGSLQVTVMVTRPTMRPVPYGTPLIFKRSNNNVPLKKIYEQLNKKKTGLAAFVKIYSANDEREIGRVPEDIARIVFPLLHRNEVHFKLTMIYPGDKRLSIGDNIIIQMDSFLTSTLFNRKENPTFSTQNGNGRERFGAIVETEQELEERNIRMGLIMLFDKIKLRPVKDEAKFLEKLKQDGDDNEIVDLEDDESFGNFLSQEPLNDELPTQHQEDTMNINQLTSFYKATQSSKQLNSLIPTTPPPELVKVELRKYQKQGLTWMLRREGISIGHDNEDKSEDDTTLLNPLWRQFQWPRNMSWHNQSTGSENDNSNPKLIFFYGNLHTGEFSLERPTMNSFKNGGILSDEMGLGKTISALSLVLMRPKDEHTTSQSLFHQESSNLSSDDVIEIKEPERSYAYKTTLIIVPMSLLTQWRDEFDKVNNNAGLTCELYYGGNVSSLKSLLIKRKNPPTVVLTTYGIVQNEWTKLSKDGTNIRSLGRTSGIFSIEFFRIILDEGHTIRNKSTITSKAVLELSSKYRWILTGTPIINRLDDLYSLVKFLKLEPWSQIGYWKQFITNPFEERNFKQAFDVVNAIMEPVLLRRTKQMKDTDGNPLVQLPPKEIVIEKLQLSKKQKLIYEEFLQRAEKTFRSGLQSGDLLKKYSTILVHILRLRQVCCDSNLIGTLDENDEDLSSGNNKLITESVDVKTLIPDTEEEEDEVPPFENDELDKLIESVEAKFIDSNQLIPVECSICTAEPIESSSAVVTECEHVFCKECLEEYGNFQKEKSLQQKCPNCRRDINLNRCLAFEKGSDGILKLIHFDRKERPAKLNALIRHLQQLQDSSAGEQVVVFSQFSSYLDILESQLNEVYSSNKLKVYKFDGRLSLKERTAVLEDFKVKDYAVQKVLLLSLKAGGVGLNLTCASYAFMMDPWWSPSMEDQAIDRIHRIGQTNSVKVIRFVIDGSIEEKMLRIQDRKRTLGEAMDTDEDERRKRRIEEIQMLFES.

Disordered regions lie at residues 35 to 54 (QVDA…IAQG) and 142 to 161 (KRED…RANS). A compositionally biased stretch (acidic residues) spans 39–49 (IQEENANDPEE). A compositionally biased stretch (polar residues) spans 148–161 (MQSSQSKKPQRANS). The 212-residue stretch at 500-711 (PTMNSFKNGG…YSLVKFLKLE (212 aa)) folds into the Helicase ATP-binding domain. 513–520 (DEMGLGKT) provides a ligand contact to ATP. Positions 662–665 (DEGH) match the DEGH box motif. The segment at 897–944 (CSICTAEPIESSSAVVTECEHVFCKECLEEYGNFQKEKSLQQKCPNCR) adopts an RING-type zinc-finger fold. The 168-residue stretch at 979-1146 (ALIRHLQQLQ…RRKRRIEEIQ (168 aa)) folds into the Helicase C-terminal domain.

It belongs to the SNF2/RAD54 helicase family.

Its subcellular location is the cytoplasm. The protein localises to the nucleus. Functionally, probable helicase, member of the UBC2/RAD6 epistasis group. Functions with DNA repair protein RAD18 in error-free postreplication DNA repair. Involved in the maintenance of wild-type rates of instability of simple repetitive sequences such as poly(GT) repeats. Seems to be involved in maintaining a balance which acts in favor of error-prone non-homologous joining during DNA double-strand breaks repairs. The sequence is that of DNA repair protein RAD5 (RAD5) from Candida glabrata (strain ATCC 2001 / BCRC 20586 / JCM 3761 / NBRC 0622 / NRRL Y-65 / CBS 138) (Yeast).